We begin with the raw amino-acid sequence, 1129 residues long: Regulator of nonsense transcripts 1 (1129 aa).

The interval 1 to 415 is sufficient for interaction with RENT2; the sequence is MSVEAYGPSS…LRSSVGAPVE (415 aa). 2 positions are modified to phosphoserine: Ser-10 and Ser-31. Residues 39–70 form a disordered region; the sequence is TLPSQTQTPPGGPGGPGGGGAGGPGGAGAGAA. The span at 52–69 shows a compositional bias: gly residues; sequence GGPGGGGAGGPGGAGAGA. The region spanning 115–272 is the Upf1 CH-rich domain; that stretch reads TKDLPIHACS…NKLEELWKEN (158 aa). The Zn(2+) site is built by Cys-123, Cys-126, Cys-137, Ser-140, Cys-145, His-155, His-159, Cys-165, Cys-183, Cys-186, Cys-209, and Cys-213. The tract at residues 123–155 is C3H; the sequence is CSYCGIHDPACVVYCNTSKKWFCNGRGNTSGSH. Positions 137 to 165 are CC/SHH/C; it reads CNTSKKWFCNGRGNTSGSHIVNHLVRAKC. Positions 183 to 213 are C4; sequence CYNCGCRNVFLLGFIPAKADSVVVLLCRQPC. ATP-binding positions include Gln-486 and 506–510; that span reads GTGKT. Residue Ser-565 is modified to Phosphoserine. Positions 676, 713, and 844 each coordinate ATP. Position 956 is a phosphoserine (Ser-956). 2 disordered regions span residues 1009 to 1058 and 1073 to 1096; these read FGQA…VASQ and SQPS…YLGD. Arg-1019 is subject to Omega-N-methylarginine. Residues 1025–1034 show a composition bias toward basic residues; that stretch reads KTGRGGRQKN. Polar residues predominate over residues 1041-1058; the sequence is PSQTNLPNSQASQDVASQ. Over residues 1073–1086 the composition is skewed to low complexity; the sequence is SQPSQMSQPGLSQP. Phosphoserine occurs at positions 1089, 1107, 1110, and 1127. 2 short sequence motifs ([ST]-Q motif) span residues 1089-1090 and 1107-1108; these read SQ. A disordered region spans residues 1110–1129; it reads STYQGERAYQHGGVTGLSQY.

It belongs to the DNA2/NAM7 helicase family. Found in a post-splicing messenger ribonucleoprotein (mRNP) complex. Associates with the exon junction complex (EJC). Associates with the SGM1C complex; is phosphorylated by the complex kinase component SGM1. Part of a complex composed of SMG1, DHX34 and UPF1; within the complex DHX34 acts as a scaffolding protein to facilitate SMG1 phosphorylation of UPF1. Interacts with UPF2. Interacts with UPF3A and UPF3B. Interacts with EST1A. Interacts with SLBP. Interacts (when hyperphosphorylated) with PNRC2. Interacts with AGO1 and AGO2. Interacts with GSPT2. Interacts with isoform 1 and isoform 5 of ADAR/ADAR1. Interacts with SMG7. Interacts with ZC3H12A; this interaction occurs in a mRNA translationally active- and termination-dependent manner and is essential for ZC3H12A-mediated degradation of target mRNAs. Interacts with CPSF6. Interacts with MOV10; the interaction is direct and RNA-dependent. Interacts with SHFL; the interaction increases in the presence of RNA. Interacts with UPF2 and DDX4; interactions are mediated by TDRD6. Interacts with DHX34 and PABPC1/PABP1; the interactions are RNA-independent. Interacts with RBM46. As to quaternary structure, (Microbial infection) Interacts with human T-cell leukemia virus 1/HTLV-1 protein Tax; this interaction inhibits the host nonsense-mediated mRNA decay (NMD). In terms of processing, phosphorylated by SMG1; required for formation of mRNA surveillance complexes. In terms of tissue distribution, ubiquitous.

It localises to the cytoplasm. The protein localises to the P-body. It is found in the nucleus. The protein resides in the perinuclear region. It carries out the reaction ATP + H2O = ADP + phosphate + H(+). Its function is as follows. RNA-dependent helicase required for nonsense-mediated decay (NMD) of aberrant mRNAs containing premature stop codons and modulates the expression level of normal mRNAs. Is recruited to mRNAs upon translation termination and undergoes a cycle of phosphorylation and dephosphorylation; its phosphorylation appears to be a key step in NMD. Recruited by release factors to stalled ribosomes together with the SMG1C protein kinase complex to form the transient SURF (SMG1-UPF1-eRF1-eRF3) complex. In EJC-dependent NMD, the SURF complex associates with the exon junction complex (EJC) (located 50-55 or more nucleotides downstream from the termination codon) through UPF2 and allows the formation of an UPF1-UPF2-UPF3 surveillance complex which is believed to activate NMD. Phosphorylated UPF1 is recognized by EST1B/SMG5, SMG6 and SMG7 which are thought to provide a link to the mRNA degradation machinery involving exonucleolytic and endonucleolytic pathways, and to serve as adapters to protein phosphatase 2A (PP2A), thereby triggering UPF1 dephosphorylation and allowing the recycling of NMD factors. UPF1 can also activate NMD without UPF2 or UPF3, and in the absence of the NMD-enhancing downstream EJC indicative for alternative NMD pathways. Plays a role in replication-dependent histone mRNA degradation at the end of phase S; the function is independent of UPF2. For the recognition of premature termination codons (PTC) and initiation of NMD a competitive interaction between UPF1 and PABPC1 with the ribosome-bound release factors is proposed. The ATPase activity of UPF1 is required for disassembly of mRNPs undergoing NMD. Together with UPF2 and dependent on TDRD6, mediates the degradation of mRNA harboring long 3'UTR by inducing the NMD machinery. Also capable of unwinding double-stranded DNA and translocating on single-stranded DNA. The polypeptide is Regulator of nonsense transcripts 1 (Homo sapiens (Human)).